Here is a 385-residue protein sequence, read N- to C-terminus: G2/mitotic-specific cyclin-B3 (385 aa).

Residues 1 to 16 (MMLRSQAKNVDLTSQA) are compositionally biased toward polar residues. Disordered regions lie at residues 1-48 (MMLR…HSKG) and 63-88 (SAKR…QKSR). Basic and acidic residues-rich tracts occupy residues 17–28 (DSRHQQKRKQAE) and 63–80 (SAKR…RDVE).

This sequence belongs to the cyclin family. Cyclin AB subfamily.

It is found in the nucleus. In terms of biological role, could be involved at the G2/M (mitosis) transition. Interacts with the CDK1 and CDK2 protein kinases. G2/M cyclins accumulate steadily during G2 and are abruptly destroyed at mitosis. Plays a role during oocyte meiosis II. This Caenorhabditis elegans protein is G2/mitotic-specific cyclin-B3 (cyb-3).